The following is a 332-amino-acid chain: MALLCYNRGCGQRFDPETNSDDACTYHPGVPVFHDALKGWSCCKRRTTDFSDFLSIVGCTKGRHNSEKPPEPVKPEVKTTEKKELCELKPKFQEHIIQAPKPVEAIKRPSPDEPMTNLELKISASLKQALDKLKLSSGNEENKKEEDNDEIKIGTSCKNGGCSKTYQGLESLEEVCVYHSGVPIFHEGMKYWSCCRRKTSDFNTFLAQEGCTKGKHMWTKKDAGKKVVPCRHDWHQTGGEVTISVYAKNSLPELSRVEANSTLLNVHIVFEGEKEFDQNVKLWGVIDVKRSYVTMTATKIEITMRKAEPMQWASLELPAAKKQEKQKDATTD.

Residue Ala-2 is modified to N-acetylalanine. Residues 2 to 77 (ALLCYNRGCG…KPPEPVKPEV (76 aa)) form an interaction with PPP5C region. Zn(2+) is bound by residues Cys-5, Cys-10, Cys-24, His-27, Cys-42, and Cys-43. CHORD domains are found at residues 5-64 (CYNR…KGRH) and 157-216 (CKNG…KGKH). Thr-47 bears the Phosphothreonine mark. At Ser-51 the chain carries Phosphoserine. The Zn(2+) site is built by Cys-59, His-64, Cys-157, Cys-162, Cys-176, His-179, Cys-194, Cys-195, Cys-211, and His-216. Positions 65–316 (NSEKPPEPVK…AEPMQWASLE (252 aa)) are interaction with HSP90AA1 and HSP90AB1. The CS domain occupies 227–316 (VVPCRHDWHQ…AEPMQWASLE (90 aa)).

Interacts with HSP90AA1, ROCK1 and ROCK2. Interacts with HSP90AB1 and PPP5C. As to expression, underexpressed in many breast and lung cancers.

Its function is as follows. Regulates centrosome duplication, probably by inhibiting the kinase activity of ROCK2. Proposed to act as co-chaperone for HSP90. May play a role in the regulation of NOD1 via a HSP90 chaperone complex. In vitro, has intrinsic chaperone activity. This function may be achieved by inhibiting association of ROCK2 with NPM1. Plays a role in ensuring the localization of the tyrosine kinase receptor EGFR to the plasma membrane, and thus ensures the subsequent regulation of EGFR activity and EGF-induced actin cytoskeleton remodeling. Involved in stress response. Prevents tumorigenesis. This Homo sapiens (Human) protein is Cysteine and histidine-rich domain-containing protein 1 (CHORDC1).